The sequence spans 336 residues: Probable carboxylesterase 6 (336 aa).

A disordered region spans residues 1-20; it reads MGGTKLTHVTTTNPNNSNIH. The span at 7 to 19 shows a compositional bias: polar residues; sequence THVTTTNPNNSNI. Residues 96-98 carry the Involved in the stabilization of the negatively charged intermediate by the formation of the oxyanion hole motif; the sequence is HGG. Active-site residues include S176, D276, and H303.

This sequence belongs to the 'GDXG' lipolytic enzyme family. As to expression, expressed in roots, leaves, flowers and siliques.

The enzyme catalyses a carboxylic ester + H2O = an alcohol + a carboxylate + H(+). Carboxylesterase acting on esters with varying acyl chain length. In Arabidopsis thaliana (Mouse-ear cress), this protein is Probable carboxylesterase 6 (CXE6).